A 436-amino-acid polypeptide reads, in one-letter code: Acetylcholine receptor non-alpha chain (436 aa).

Over 1 to 195 the chain is Extracellular; sequence IIDVHEIDQI…IFYLELRRKP (195 aa). The N-linked (GlcNAc...) asparagine glycan is linked to N62. A disulfide bridge links C89 with C103. An N-linked (GlcNAc...) asparagine glycan is attached at N140. 3 helical membrane-spanning segments follow: residues 196-219, 227-245, and 261-280; these read LFYT…AFYL, VTLC…LLLK, and YLLF…VISL. The Cytoplasmic segment spans residues 281 to 404; the sequence is NLHFRRPSTH…WKFVARVLDR (124 aa). The chain crosses the membrane as a helical span at residues 405 to 423; sequence LFLLLFSIACFLGTILILF.

This sequence belongs to the ligand-gated ion channel (TC 1.A.9) family. Acetylcholine receptor (TC 1.A.9.1) subfamily.

The protein localises to the postsynaptic cell membrane. Its subcellular location is the cell membrane. Functionally, after binding acetylcholine, the AChR responds by an extensive change in conformation that affects all subunits and leads to opening of an ion-conducting channel across the plasma membrane. This is Acetylcholine receptor non-alpha chain from Onchocerca volvulus.